The following is a 58-amino-acid chain: MTQVTVGENEGIESALRRFKRQVSKSGIFADLKRLRHHETPVEKYKRKLQQRRKARRR.

The protein belongs to the bacterial ribosomal protein bS21 family.

The protein is Small ribosomal subunit protein bS21 of Prochlorococcus marinus (strain MIT 9301).